We begin with the raw amino-acid sequence, 776 residues long: Semaphorin-4F (776 aa).

An N-terminal signal peptide occupies residues 1–39; that stretch reads MLARAERPRPGPRPPPVFPFPPPLSLLLLLAILSAPVCG. The Extracellular segment spans residues 40–665; that stretch reads RVPRSVPRTS…GPSNRAHTVV (626 aa). The Sema domain occupies 47–515; sequence RTSLPISEAD…SHTEVTQVNT (469 aa). Asn-69 carries an N-linked (GlcNAc...) asparagine glycan. A disulfide bond links Cys-117 and Cys-127. Residue Asn-138 is glycosylated (N-linked (GlcNAc...) asparagine). 3 disulfide bridges follow: Cys-145/Cys-154, Cys-278/Cys-389, and Cys-302/Cys-348. Asn-514 is a glycosylation site (N-linked (GlcNAc...) asparagine). A PSI domain is found at 517-568; that stretch reads NCGRLQSCSECILAQDPVCAWSFRLDACVAHAGEHRGMVQDIESADVSSLCP. 3 disulfides stabilise this stretch: Cys-518–Cys-535, Cys-527–Cys-544, and Cys-592–Cys-633. The 56-residue stretch at 585–640 folds into the Ig-like C2-type domain; it reads VGHVVLPCSPSSAWASCVWHQPSGVTALTPRRDGLEVVVTPGAMGAYACECQEGGA. The helical transmembrane segment at 666–686 threads the bilayer; sequence GAGLVGFLLGVLAASLTLLLI. At 687–776 the chain is on the cytoplasmic side; that stretch reads GRRQQRRRQR…PLATCDETSI (90 aa). Residues 702–741 are disordered; sequence DKVGLDLGAPPSGTTSYSQDPPSPSPEDERLPLALGKRGS. 2 positions are modified to phosphoserine: Ser-724 and Ser-726. A PDZ-binding motif is present at residues 774–776; sequence TSI.

The protein belongs to the semaphorin family. In terms of assembly, interacts (via PDZ-binding motif) with DLG4/SAP90 (via PDZ domain 2); this interaction may promote translocation of DLG4/SAP90 to the membrane. In terms of tissue distribution, expressed at low levels in the developing embryo. Expressed at high levels in the lung and adult central nervous system, including the dorsal root ganglia.

It is found in the cell membrane. The protein localises to the postsynaptic density. It localises to the perikaryon. Its subcellular location is the cell projection. The protein resides in the dendrite. Probable cell surface receptor that regulates oligodendroglial precursor cell migration. Might also regulate differentiation of oligodendroglial precursor cells. Has growth cone collapse activity against retinal ganglion-cell axons. The chain is Semaphorin-4F (Sema4f) from Rattus norvegicus (Rat).